The primary structure comprises 396 residues: Digeranylgeranylglycerophospholipid reductase (396 aa).

11 residues coordinate FAD: Gly-14, Glu-33, Cys-44, Gly-45, Gly-47, Arg-100, Ala-124, Glu-162, Asp-283, Gly-295, and Ile-296. Positions 338 and 374 each coordinate a 2,3-bis-O-(geranylgeranyl)-sn-glycerol 1-phospholipid.

The protein belongs to the geranylgeranyl reductase family. DGGGPL reductase subfamily. In terms of assembly, monomer. FAD serves as cofactor.

It localises to the cell membrane. The catalysed reaction is 2,3-bis-O-(phytanyl)-sn-glycerol 1-phosphate + 8 NADP(+) = 2,3-bis-O-(geranylgeranyl)-sn-glycerol 1-phosphate + 8 NADPH + 8 H(+). The enzyme catalyses 2,3-bis-O-(phytanyl)-sn-glycerol 1-phosphate + 8 NAD(+) = 2,3-bis-O-(geranylgeranyl)-sn-glycerol 1-phosphate + 8 NADH + 8 H(+). It carries out the reaction a 2,3-bis-O-phytanyl-sn-glycerol 1-phospholipid + 8 A = a 2,3-bis-O-(geranylgeranyl)-sn-glycerol 1-phospholipid + 8 AH2. It catalyses the reaction CDP-2,3-bis-O-(geranylgeranyl)-sn-glycerol + 8 AH2 = CDP-2,3-bis-O-(phytanyl)-sn-glycerol + 8 A. The catalysed reaction is archaetidylserine + 8 AH2 = 2,3-bis-O-phytanyl-sn-glycero-3-phospho-L-serine + 8 A. The protein operates within membrane lipid metabolism; glycerophospholipid metabolism. Is involved in the reduction of 2,3-digeranylgeranylglycerophospholipids (unsaturated archaeols) into 2,3-diphytanylglycerophospholipids (saturated archaeols) in the biosynthesis of archaeal membrane lipids. Catalyzes the formation of archaetidic acid (2,3-di-O-phytanyl-sn-glyceryl phosphate) from 2,3-di-O-geranylgeranylglyceryl phosphate (DGGGP) via the hydrogenation of each double bond of the isoprenoid chains. Can use both NADH and NADPH as electron donors. Also catalyzes the reduction of 2,3-di-O-geranylgeranylglyceryl phosphate analogs such as 2,3-di-O-phytyl-sn-glyceryl phosphate (DPHGP), 3-O-(2,3-di-O-phytyl-sn-glycero-phospho)-sn-glycerol (DPHGPG) and 2,3-di-O-phytyl-sn-glycero-phosphoethanolamine (DPHGPE). Is not active toward 2,3-di-O-geranylgeranylglycerol. Is also probably able to reduce double bonds of geranyl groups in CDP-2,3-bis-O-(geranylgeranyl)-sn-glycerol and archaetidylserine, thus acting at various stages in the biosynthesis of archaeal membrane lipids. This is Digeranylgeranylglycerophospholipid reductase from Thermoplasma acidophilum (strain ATCC 25905 / DSM 1728 / JCM 9062 / NBRC 15155 / AMRC-C165).